The chain runs to 743 residues: Sulfhydryl oxidase 1 (743 aa).

The first 42 residues, 1–42 (MWRRRARSGGGGGGGGGGAAPRCRWWPAVLALLAAALPAARS), serve as a signal peptide directing secretion. One can recognise a Thioredoxin domain in the interval 43 to 166 (RSLYSPSDPL…LRRAIITNLE (124 aa)). Active-site nucleophile residues include Cys-80 and Cys-83. Cystine bridges form between Cys-80–Cys-83 and Cys-111–Cys-120. N-linked (GlcNAc...) asparagine glycosylation is found at Asn-254, Asn-288, Asn-295, Asn-371, and Asn-401. Cys-407 and Cys-419 form a disulfide bridge. Residues 410-513 (SEPHFRGYPC…EDPQFPKLQW (104 aa)) form the ERV/ALR sulfhydryl oxidase domain. Residues Arg-415, Trp-422, His-426, Glu-461, His-465, 488–495 (WSHHNEVN), Lys-510, and Trp-513 contribute to the FAD site. A disulfide bond links Cys-459 and Cys-462. Cysteines 519 and 522 form a disulfide. Positions 567–617 (ASARLSTAGLREKEEEERKEEEEEGEKETEKPHREGETGRPGSSELRRPSI) are disordered. Acidic residues predominate over residues 580–593 (EEEERKEEEEEGEK). Residues 594 to 604 (ETEKPHREGET) are compositionally biased toward basic and acidic residues. The helical transmembrane segment at 707 to 727 (SLCIALYFLSSMCLLGMYTFF) threads the bilayer.

The protein belongs to the quiescin-sulfhydryl oxidase (QSOX) family. Requires FAD as cofactor. Post-translationally, N-glycosylated. O-glycosylated on Thr and Ser residues.

It localises to the golgi apparatus membrane. Its subcellular location is the secreted. The enzyme catalyses 2 R'C(R)SH + O2 = R'C(R)S-S(R)CR' + H2O2. Its function is as follows. Catalyzes the oxidation of sulfhydryl groups in peptide and protein thiols to disulfides with the reduction of oxygen to hydrogen peroxide. Plays a role in disulfide bond formation in a variety of extracellular proteins. In fibroblasts, required for normal incorporation of laminin into the extracellular matrix, and thereby for normal cell-cell adhesion and cell migration. This chain is Sulfhydryl oxidase 1 (QSOX1), found in Gallus gallus (Chicken).